We begin with the raw amino-acid sequence, 167 residues long: NAD(P)H-quinone oxidoreductase subunit J (167 aa).

The protein belongs to the complex I 30 kDa subunit family. NDH-1 can be composed of about 15 different subunits; different subcomplexes with different compositions have been identified which probably have different functions.

Its subcellular location is the cellular thylakoid membrane. The enzyme catalyses a plastoquinone + NADH + (n+1) H(+)(in) = a plastoquinol + NAD(+) + n H(+)(out). It catalyses the reaction a plastoquinone + NADPH + (n+1) H(+)(in) = a plastoquinol + NADP(+) + n H(+)(out). In terms of biological role, NDH-1 shuttles electrons from an unknown electron donor, via FMN and iron-sulfur (Fe-S) centers, to quinones in the respiratory and/or the photosynthetic chain. The immediate electron acceptor for the enzyme in this species is believed to be plastoquinone. Couples the redox reaction to proton translocation, and thus conserves the redox energy in a proton gradient. Cyanobacterial NDH-1 also plays a role in inorganic carbon-concentration. The polypeptide is NAD(P)H-quinone oxidoreductase subunit J (Trichodesmium erythraeum (strain IMS101)).